The sequence spans 515 residues: Protein pid-4 (515 aa).

Residues 496 to 515 (DRSPQKFKFPASGSYMKPAN) are disordered.

As to quaternary structure, may interact with pid-2, app-1 and prmt-5.

It is found in the cytoplasm. Its subcellular location is the perinuclear region. It localises to the P-body. Functionally, together with pid-5, it is involved in gene silencing mediated by a class of 21 nucleotide PIWI-interacting RNAs (piRNAs) that possess a uracil residue at the 5'-end (also called 21U-RNAs) and guide the Piwi protein prg-1 to its DNA targets for silencing. Together with pid-5, it is required for the biogenesis of secondary and tertiary 22G-siRNAs. Specifically, promotes the production of 22G-siRNAs from the 5' end of target mRNAs. Together with pid-5, plays a role in small RNA-directed transgenerational epigenetic inheritance (also called RNAe) over several generations and germline immortality. Together with pid-5, plays a role in the formation of liquid-like condensates in the cytoplasm called Z granules. The protein is Protein pid-4 of Caenorhabditis elegans.